Consider the following 274-residue polypeptide: NADPH-dependent 7-cyano-7-deazaguanine reductase (274 aa).

80–82 contributes to the substrate binding site; that stretch reads VES. 82 to 83 contributes to the NADPH binding site; the sequence is SK. The active-site Thioimide intermediate is the Cys181. Residue Asp188 is the Proton donor of the active site. Residue 220-221 coordinates substrate; the sequence is HE. 249 to 250 is an NADPH binding site; sequence RG.

Belongs to the GTP cyclohydrolase I family. QueF type 2 subfamily. Homodimer.

It localises to the cytoplasm. The catalysed reaction is 7-aminomethyl-7-carbaguanine + 2 NADP(+) = 7-cyano-7-deazaguanine + 2 NADPH + 3 H(+). Its pathway is tRNA modification; tRNA-queuosine biosynthesis. Its function is as follows. Catalyzes the NADPH-dependent reduction of 7-cyano-7-deazaguanine (preQ0) to 7-aminomethyl-7-deazaguanine (preQ1). In Paraburkholderia phymatum (strain DSM 17167 / CIP 108236 / LMG 21445 / STM815) (Burkholderia phymatum), this protein is NADPH-dependent 7-cyano-7-deazaguanine reductase.